Reading from the N-terminus, the 328-residue chain is Arabinose 5-phosphate isomerase KdsD (328 aa).

One can recognise an SIS domain in the interval 42–184 (CEKMFWCKGK…AVALLKARGF (143 aa)). Substrate is bound by residues 75–76 (GT), histidine 82, histidine 88, 114–123 (ALIPVLKRLH), 148–150 (KVA), threonine 222, and aspartate 275. Histidine 82 contacts Zn(2+). One can recognise a CBS 1 domain in the interval 210-268 (MHTGDEIPHVKKTASLRDALLEVTRKNLGMTVICDDNMMIEGIFTDGDLRRVFDMGVDV). The region spanning 277-328 (MTPGGIRVRPGILAVEALNLMQSRHITSVMVADGDHLLGVLHMHDLLRAGVV) is the CBS 2 domain.

The protein belongs to the SIS family. GutQ/KpsF subfamily. Homotetramer.

The catalysed reaction is D-arabinose 5-phosphate = D-ribulose 5-phosphate. Its pathway is carbohydrate biosynthesis; 3-deoxy-D-manno-octulosonate biosynthesis; 3-deoxy-D-manno-octulosonate from D-ribulose 5-phosphate: step 1/3. It participates in bacterial outer membrane biogenesis; lipopolysaccharide biosynthesis. Involved in the biosynthesis of 3-deoxy-D-manno-octulosonate (KDO), a unique 8-carbon sugar component of lipopolysaccharides (LPSs). Catalyzes the reversible aldol-ketol isomerization between D-ribulose 5-phosphate (Ru5P) and D-arabinose 5-phosphate (A5P). This chain is Arabinose 5-phosphate isomerase KdsD (kdsD), found in Shigella flexneri.